A 345-amino-acid polypeptide reads, in one-letter code: Dihydroorotase (345 aa).

Residues His-14 and His-16 each coordinate Zn(2+). Residues 16–18 (HLR) and Asn-42 contribute to the substrate site. Positions 102, 139, and 177 each coordinate Zn(2+). The residue at position 102 (Lys-102) is an N6-carboxylysine. His-139 contributes to the substrate binding site. Leu-222 is a binding site for substrate. Asp-250 serves as a coordination point for Zn(2+). Asp-250 is a catalytic residue. 2 residues coordinate substrate: His-254 and Ala-266.

The protein belongs to the metallo-dependent hydrolases superfamily. DHOase family. Class II DHOase subfamily. In terms of assembly, homodimer. Zn(2+) is required as a cofactor.

It carries out the reaction (S)-dihydroorotate + H2O = N-carbamoyl-L-aspartate + H(+). The protein operates within pyrimidine metabolism; UMP biosynthesis via de novo pathway; (S)-dihydroorotate from bicarbonate: step 3/3. In terms of biological role, catalyzes the reversible cyclization of carbamoyl aspartate to dihydroorotate. The polypeptide is Dihydroorotase (Nitrosomonas eutropha (strain DSM 101675 / C91 / Nm57)).